A 435-amino-acid chain; its full sequence is Plant UBX domain-containing protein 6 (435 aa).

Disordered stretches follow at residues 1–150, 208–265, and 311–352; these read MDVN…PQKV, ENYT…EDQP, and PTTT…SMSS. Over residues 49–62 the composition is skewed to low complexity; sequence TSSFSTFDGSSGYS. Over residues 112–129 the composition is skewed to basic and acidic residues; sequence AVEHYGGEENRAIERPEQ. The span at 130–141 shows a compositional bias: low complexity; it reads SSRSMSEETVSS. The SEP 1 domain occupies 150–211; it reads VFTHTVTSWS…IISREEENYT (62 aa). The segment covering 211 to 222 has biased composition (polar residues); the sequence is TESQAGSDSAST. A compositionally biased stretch (basic and acidic residues) spans 231-242; it reads RAKESAIERSEQ. Positions 252–265 are enriched in acidic residues; the sequence is DSAELQEQQQEDQP. Positions 268-343 constitute an SEP 2 domain; it reads VVTYTVTIWR…ESTSTEPPLT (76 aa). Composition is skewed to low complexity over residues 312-323 and 333-349; these read TTTRSTSCSSQT and SESTSTEPPLTTTQPPS. The UBX domain maps to 357–434; the sequence is PAAPTTSIQL…GIANSVLVQK (78 aa).

This is Plant UBX domain-containing protein 6 from Arabidopsis thaliana (Mouse-ear cress).